A 506-amino-acid chain; its full sequence is MGIGLIILYLLIGLLAYDFTKKNKKISKNDPKQPLAIPVLGHLHLFGSQPHRSLTELAKKFGGIFTLWMGDERSMVITDPNILRELYVKNHLNFYNRASSESIRIYSGNLVDISFSVGESWKNRRRYVSAALTKTKVLNVITLIEEQANFLINSMQYYAKSGEPFFPHKYYNKYTMNIVMSIGFSKTISENESVEEGPISQLIIPFYNILENLGSGNLGDYVWYTQPFFYFKNKKLEQDTKKVYTFLEEIYNEHIKNLDESNPRDLMDQLIISTGGKEKDMVIHVSTDFLLAGSDTNASTLEWFCIFLANNPEIQKKAYEELISVVGKDCKAVTTKYRDDCPYLVGAIKETLRMRTPAPLSLIRVSEEDFMTSGGIFIPKGTQIVPNLYGIGQNFVDDPSSYKPERWVEYYKNKTPTREMEATTETKSNITTEILPNDLDKVVLPFSIGPRNCPGNIISEINLFLACSNILLNFEFSNGGKKIDETEVFGITIHPKDFSIQLKKRE.

Residues 1–21 (MGIGLIILYLLIGLLAYDFTK) traverse the membrane as a helical segment. Residue cysteine 453 coordinates heme.

It belongs to the cytochrome P450 family. Requires heme as cofactor.

It is found in the membrane. This is Probable cytochrome P450 519E1 (cyp519E1) from Dictyostelium discoideum (Social amoeba).